The chain runs to 536 residues: Proto-oncogene tyrosine-protein kinase Yrk (536 aa).

A lipid anchor (N-myristoyl glycine) is attached at glycine 2. S-palmitoyl cysteine attachment occurs at residues cysteine 3 and cysteine 6. Positions isoleucine 10 to glutamine 36 are disordered. The 62-residue stretch at glycine 81–serine 142 folds into the SH3 domain. The region spanning tryptophan 148–cysteine 245 is the SH2 domain. The Protein kinase domain occupies leucine 270–phenylalanine 523. ATP is bound by residues leucine 276 to valine 284 and lysine 298. Aspartate 389 functions as the Proton acceptor in the catalytic mechanism. Phosphotyrosine; by autocatalysis is present on tyrosine 419. A Phosphotyrosine modification is found at tyrosine 530.

This sequence belongs to the protein kinase superfamily. Tyr protein kinase family. SRC subfamily. In terms of processing, phosphorylated. There are elevated levels of this protein in neural and hematopoietic tissues.

It carries out the reaction L-tyrosyl-[protein] + ATP = O-phospho-L-tyrosyl-[protein] + ADP + H(+). In terms of biological role, may participate in signaling pathways. The polypeptide is Proto-oncogene tyrosine-protein kinase Yrk (YRK) (Gallus gallus (Chicken)).